Consider the following 1320-residue polypeptide: Immunoglobulin superfamily member 1 (1320 aa).

The first 18 residues, 1 to 18 (MMLRTFTLLLLCIWLNRG), serve as a signal peptide directing secretion. Over 19-504 (MTSMAAVESQ…LPWNSILNEA (486 aa)) the chain is Extracellular. Ig-like C2-type domains are found at residues 29–113 (PELW…KILE), 115–212 (EAPG…KLVV), 224–308 (HPGP…IWVT), 312–399 (PKTW…ATYN), and 401–482 (VELI…HRSE). A glycan (N-linked (GlcNAc...) asparagine) is linked at Asn-44. Residues Cys-49 and Cys-97 are joined by a disulfide bond. Residues Asn-329, Asn-365, and Asn-372 are each glycosylated (N-linked (GlcNAc...) asparagine). Disulfide bonds link Cys-334-Cys-383 and Cys-423-Cys-466. A helical membrane pass occupies residues 505 to 525 (IRVSLTVQFLSLLLLVLWLQW). Residues 526–534 (KCRRLRLRE) are Cytoplasmic-facing. Residues 535 to 555 (AWLLGTAQGVAMLVILIALLC) traverse the membrane as a helical segment. Topologically, residues 556–1320 (CGLCNGALTE…GVSVEQTVPI (765 aa)) are extracellular. Ig-like C2-type domains lie at 572-665 (PTPK…VGTD), 662-756 (VGTD…ELVI), 761-853 (PKPF…LIVT), 857-942 (PKPT…YLST), 949-1044 (TDTF…ELIV), 1049-1134 (PKPS…NHSN), and 1145-1226 (PKPS…EPSD). Residues Asn-591, Asn-731, Asn-782, Asn-830, Asn-874, Asn-923, Asn-970, Asn-1011, and Asn-1066 are each glycosylated (N-linked (GlcNAc...) asparagine). Cysteines 783 and 833 form a disulfide. Cys-879 and Cys-926 form a disulfide bridge. A disulfide bridge connects residues Cys-1071 and Cys-1118. 2 N-linked (GlcNAc...) asparagine glycosylation sites follow: Asn-1131 and Asn-1207. The cysteines at positions 1167 and 1210 are disulfide-linked.

As to quaternary structure, interacts with INHA; the interaction is not confirmed by standard receptor binding assays. Interacts with ACVR1B; the interaction appears to be ligand-dependent as it is diminished by inhibin B and activin A. Interacts with ACVR2A, ACVR2B, ACVRL1 and BMPR1B. Interacts with HECTD1. As to expression, expressed in pituitary gland, testis and liver. Isoform 2 is expressed pituitary gland and testis.

It localises to the membrane. It is found in the secreted. Seems to be a coreceptor in inhibin signaling, but seems not to be a high-affinity inhibin receptor. Antagonizes activin A signaling in the presence or absence of inhibin B. Necessary to mediate a specific antagonistic effect of inhibin B on activin-stimulated transcription. This is Immunoglobulin superfamily member 1 (Igsf1) from Rattus norvegicus (Rat).